The chain runs to 250 residues: Bacteriorhodopsin-II (250 aa).

Helical transmembrane passes span 14 to 34 (EGIWLALGTVGMLLGMVYFMA), 49 to 69 (VITILIAGIAASSYLSMFFGF), 89 to 109 (YADWLFTTPLLLLDIGLLAGA), 114 to 134 (MASLITIDAFMIVTGLAATLM), 142 to 162 (AFWTISTIAMLFVLYYLVVVV), 183 to 203 (IILVAWAIYPVAWLVGTEGLG), and 210 to 230 (ETLLFMILDLTAKIGFGFILL). Lys-222 is modified (N6-(retinylidene)lysine).

This sequence belongs to the archaeal/bacterial/fungal opsin family. In terms of processing, the covalent binding of retinal to the apoprotein, bacterioopsin, generates bacteriorhodopsin.

Its subcellular location is the membrane. In terms of biological role, light-driven proton pump. The polypeptide is Bacteriorhodopsin-II (xop1) (Haloarcula marismortui (strain ATCC 43049 / DSM 3752 / JCM 8966 / VKM B-1809) (Halobacterium marismortui)).